We begin with the raw amino-acid sequence, 222 residues long: Ribose-5-phosphate isomerase A (222 aa).

Residues 28 to 31 (TGST), 81 to 84 (DGAD), and 94 to 97 (KGGG) contribute to the substrate site. Residue E103 is the Proton acceptor of the active site. Substrate is bound at residue K121.

This sequence belongs to the ribose 5-phosphate isomerase family. As to quaternary structure, homodimer.

The enzyme catalyses aldehydo-D-ribose 5-phosphate = D-ribulose 5-phosphate. Its pathway is carbohydrate degradation; pentose phosphate pathway; D-ribose 5-phosphate from D-ribulose 5-phosphate (non-oxidative stage): step 1/1. Catalyzes the reversible conversion of ribose-5-phosphate to ribulose 5-phosphate. In Azoarcus sp. (strain BH72), this protein is Ribose-5-phosphate isomerase A.